Consider the following 243-residue polypeptide: Cyclin-dependent kinase 20 (243 aa).

The Protein kinase domain occupies 4 to 243 (YCILGRIGEG…IHLSCRFLSV (240 aa)). ATP-binding positions include 10–18 (IGEGAHGIV) and lysine 33. Aspartate 127 functions as the Proton acceptor in the catalytic mechanism.

The protein belongs to the protein kinase superfamily. CMGC Ser/Thr protein kinase family. CDC2/CDKX subfamily. In terms of assembly, monomer. Interacts with TBC1D32 and MAK.

The protein localises to the nucleus. It localises to the cytoplasm. Its subcellular location is the cell projection. The protein resides in the cilium. The enzyme catalyses L-seryl-[protein] + ATP = O-phospho-L-seryl-[protein] + ADP + H(+). It catalyses the reaction L-threonyl-[protein] + ATP = O-phospho-L-threonyl-[protein] + ADP + H(+). Required for high-level Shh responses in the developing neural tube. Together with TBC1D32, controls the structure of the primary cilium by coordinating assembly of the ciliary membrane and axoneme, allowing GLI2 to be properly activated in response to SHH signaling. Involved in cell growth. Activates CDK2, a kinase involved in the control of the cell cycle, by phosphorylating residue 'Thr-160'. This Macaca mulatta (Rhesus macaque) protein is Cyclin-dependent kinase 20 (CDK20).